A 69-amino-acid chain; its full sequence is MADDEVVDPKKYLEESCKPKCVKPLLEYQACVKRIQGDDSGHKHCTGQYFDYWQCIDKCVAPKLFAKLK.

Disulfide bonds link Cys-17-Cys-59 and Cys-31-Cys-45.

It belongs to the UQCRH/QCR6 family. Component of the ubiquinol-cytochrome c oxidoreductase (cytochrome b-c1 complex, complex III, CIII), a multisubunit enzyme composed of 10 subunits. The complex is composed of 3 respiratory subunits cytochrome b (MT-CYB), cytochrome c1 (CYC1-1 or CYC1-2) and Rieske protein (UCR1-1 or UCR1-2), 2 core protein subunits MPPalpha1 (or MPPalpha2) and MPPB, and 5 low-molecular weight protein subunits QCR7-1 (or QCR7-2), UCRQ-1 (or UCRQ-2), QCR9, UCRY and probably QCR6-1 (or QCR6-2). The complex exists as an obligatory dimer and forms supercomplexes (SCs) in the inner mitochondrial membrane with NADH-ubiquinone oxidoreductase (complex I, CI), resulting in different assemblies (supercomplexes SCI(1)III(2) and SCI(2)III(4)).

The protein localises to the mitochondrion inner membrane. Component of the ubiquinol-cytochrome c oxidoreductase, a multisubunit transmembrane complex that is part of the mitochondrial electron transport chain which drives oxidative phosphorylation. The respiratory chain contains 3 multisubunit complexes succinate dehydrogenase (complex II, CII), ubiquinol-cytochrome c oxidoreductase (cytochrome b-c1 complex, complex III, CIII) and cytochrome c oxidase (complex IV, CIV), that cooperate to transfer electrons derived from NADH and succinate to molecular oxygen, creating an electrochemical gradient over the inner membrane that drives transmembrane transport and the ATP synthase. The cytochrome b-c1 complex catalyzes electron transfer from ubiquinol to cytochrome c, linking this redox reaction to translocation of protons across the mitochondrial inner membrane, with protons being carried across the membrane as hydrogens on the quinol. In the process called Q cycle, 2 protons are consumed from the matrix, 4 protons are released into the intermembrane space and 2 electrons are passed to cytochrome c. This chain is Cytochrome b-c1 complex subunit 6-1, mitochondrial (QCR6-1), found in Arabidopsis thaliana (Mouse-ear cress).